A 186-amino-acid chain; its full sequence is Chromosome-anchoring protein RacA (186 aa).

A DNA-binding region (H-T-H motif) is located at residues threonine 3–glutamine 23. A coiled-coil region spans residues glutamate 90 to arginine 170. The disordered stretch occupies residues glutamate 158–phenylalanine 186. Basic and acidic residues predominate over residues methionine 160–lysine 175.

This sequence belongs to the RacA family.

The protein localises to the cytoplasm. Functionally, required for the formation of axial filaments and for anchoring the origin regions at the cell poles in sporulating cells, thus ensuring proper chromosome segregation in the prespore. Binds in a dispersed manner throughout the chromosome but preferentially to sites clustered in the origin portion of the chromosome, causing condensation of the chromosome and its remodeling into an elongated, anchored structure. The chain is Chromosome-anchoring protein RacA from Bacillus licheniformis (strain ATCC 14580 / DSM 13 / JCM 2505 / CCUG 7422 / NBRC 12200 / NCIMB 9375 / NCTC 10341 / NRRL NRS-1264 / Gibson 46).